Here is a 232-residue protein sequence, read N- to C-terminus: Replicative helicase loading/DNA remodeling protein DnaD (232 aa).

The N-terminal domain stretch occupies residues 1-98; it reads MKKQQFIDMQ…QNGIKFEKYS (98 aa). The DDBH1 stretch occupies residues 1-116; sequence MKKQQFIDMQ…YEYIQLAQNQ (116 aa). A C-terminal domain region spans residues 99 to 205; the sequence is LQPLWGKLYE…VEQAKIHSQK (107 aa). The DDBH2 stretch occupies residues 131–200; sequence TIFEEEFARP…NGLKTVEQAK (70 aa). The interval 206-232 is C-terminal tail; it reads FRRVQAKQNEPQKEYKRQVPFYNWLEQ.

The protein belongs to the DnaB/DnaD family. The DNA replisome assembles sequentially on oriC in this order; DnaA, DnaD, DnaB, DnaI-DnaC helicase. Homodimer. Homotetramer. Oligomerization in vitro is concentration dependent. Part of the replication restart primosome which assembles in this order; PriA, DnaD then DnaB. The preferred DNA substrate mimics an arrested DNA replication fork with unreplicated lagging strand. Interacts with DnaA, DnaB and PriA. Interaction with DnaB requires DnaD to dimerize.

The protein resides in the cytoplasm. With respect to regulation, recruitment to oriC requires DnaA but not DnaB, DnaC or DnaI and is blocked by SirA. In terms of biological role, required to load replicative helicase DnaC onto replication forks. Binds to a DnaD recognition element (DRE) which has pairs of 5'-TnnT-3' motifs; there is a strong DRE at oriC opposite the DnaA-trios recognized by DnaA. During DNA replication from the origin of replication (oriC) in the DNA replisome, DnaD is required after DnaA, before DnaB and subsequent helicase DnaC loading. A component of the replication restart primosome, which reloads the replicative helicase on sites other than oriC. DnaB, DnaD and DnaI may also be required for a PriA-independent pathway of replication fork restart. DnaB and DnaD work together to allow DnaB access to single-stranded (ss)DNA. Has DNA remodeling activity that converts supercoiled plasmid into an open circular form; DnaD forms scaffolds inside the plasmid DNA. Plasmid relaxation incorporates both wrapping around the DnaD protein scaffold and simultaneous untwisting, no nicking of the DNA is seen. Also converts linear DNA into an open circular form. Disrupts a replicative helicase-DnaI complex. Inhibits the ability of DnaA-ATP to form a helix on DNA; does not disassemble preformed helices in vitro. Binds ssDNA, and replication fork-like substrates, supercoiled plasmid, but not stably to short double-stranded (ds)DNA. DnaD stimulates DnaB DNA-binding activities. DnaB and DnaD are required to load helicase on the repN plasmid origin of replication (oriN). Causes a severe growth defect upon overexpression even in an oriC-independent strain. In Bacillus subtilis (strain 168), this protein is Replicative helicase loading/DNA remodeling protein DnaD.